The chain runs to 777 residues: Santalene and bergamotene synthase, chloroplastic (777 aa).

Residues 1–36 (MIVGYRSTIITLSHPKLGNGKTISSNAIFQRSCRVR) constitute a chloroplast transit peptide. Mg(2+) is bound by residues D530 and D534. The DDXXD motif motif lies at 530–534 (DDQFD).

The protein belongs to the terpene synthase family. Tpse subfamily. Requires Mg(2+) as cofactor. It depends on Mn(2+) as a cofactor.

Its subcellular location is the plastid. It localises to the chloroplast. It catalyses the reaction (2Z,6Z)-farnesyl diphosphate = (+)-alpha-santalene + diphosphate. The catalysed reaction is (2Z,6Z)-farnesyl diphosphate = (+)-endo-beta-bergamotene + diphosphate. It carries out the reaction (2Z,6Z)-farnesyl diphosphate = (1S,5S,6S)-alpha-bergamotene + diphosphate. (2Z,6Z)-farnesyl diphosphate cyclizing enzyme. Produces (+)-alpha-santalene, (+)-endo-beta-bergamotene, (-)-endo-alpha-bergamotene, and at lower amounts, (-)exo-alpha-bergamotene and (+)-epi-beta-santalene. Not able to use geranyl diphosphate, E,E-farnesyl diphosphate or E,E,E-geranylgeranyl diphosphate as substrates, but able to use Neryl diphosphate to make the monoterpene terpineol. This Solanum habrochaites (Wild tomato) protein is Santalene and bergamotene synthase, chloroplastic (SBS).